A 545-amino-acid chain; its full sequence is CTP synthase (545 aa).

The tract at residues 1 to 266 (MTTRYIFVTG…DELVIKRFNI (266 aa)) is amidoligase domain. Ser-14 contributes to the CTP binding site. Ser-14 contributes to the UTP binding site. Residues 15-20 (SLGKGI) and Asp-72 contribute to the ATP site. Mg(2+)-binding residues include Asp-72 and Glu-140. Residues 147–149 (DIE), 187–192 (KTKPTQ), and Lys-223 contribute to the CTP site. Residues 187–192 (KTKPTQ) and Lys-223 contribute to the UTP site. An ATP-binding site is contributed by 239–241 (KDV). A Glutamine amidotransferase type-1 domain is found at 291–542 (TIGMVGKYIE…IAASLSHQKR (252 aa)). Gly-352 contributes to the L-glutamine binding site. The active-site Nucleophile; for glutamine hydrolysis is the Cys-379. Residues 380 to 383 (LGMQ), Glu-403, and Arg-470 contribute to the L-glutamine site. Residues His-515 and Glu-517 contribute to the active site.

The protein belongs to the CTP synthase family. In terms of assembly, homotetramer.

It carries out the reaction UTP + L-glutamine + ATP + H2O = CTP + L-glutamate + ADP + phosphate + 2 H(+). The catalysed reaction is L-glutamine + H2O = L-glutamate + NH4(+). The enzyme catalyses UTP + NH4(+) + ATP = CTP + ADP + phosphate + 2 H(+). It participates in pyrimidine metabolism; CTP biosynthesis via de novo pathway; CTP from UDP: step 2/2. Its activity is regulated as follows. Allosterically activated by GTP, when glutamine is the substrate; GTP has no effect on the reaction when ammonia is the substrate. The allosteric effector GTP functions by stabilizing the protein conformation that binds the tetrahedral intermediate(s) formed during glutamine hydrolysis. Inhibited by the product CTP, via allosteric rather than competitive inhibition. In terms of biological role, catalyzes the ATP-dependent amination of UTP to CTP with either L-glutamine or ammonia as the source of nitrogen. Regulates intracellular CTP levels through interactions with the four ribonucleotide triphosphates. In Shewanella denitrificans (strain OS217 / ATCC BAA-1090 / DSM 15013), this protein is CTP synthase.